The chain runs to 527 residues: Bifunctional purine biosynthesis protein PurH (527 aa).

One can recognise an MGS-like domain in the interval 9–156; that stretch reads NAKRPIRRAL…KNHPSVAVVV (148 aa).

The protein belongs to the PurH family.

The catalysed reaction is (6R)-10-formyltetrahydrofolate + 5-amino-1-(5-phospho-beta-D-ribosyl)imidazole-4-carboxamide = 5-formamido-1-(5-phospho-D-ribosyl)imidazole-4-carboxamide + (6S)-5,6,7,8-tetrahydrofolate. The enzyme catalyses IMP + H2O = 5-formamido-1-(5-phospho-D-ribosyl)imidazole-4-carboxamide. It functions in the pathway purine metabolism; IMP biosynthesis via de novo pathway; 5-formamido-1-(5-phospho-D-ribosyl)imidazole-4-carboxamide from 5-amino-1-(5-phospho-D-ribosyl)imidazole-4-carboxamide (10-formyl THF route): step 1/1. It participates in purine metabolism; IMP biosynthesis via de novo pathway; IMP from 5-formamido-1-(5-phospho-D-ribosyl)imidazole-4-carboxamide: step 1/1. In Mycolicibacterium paratuberculosis (strain ATCC BAA-968 / K-10) (Mycobacterium paratuberculosis), this protein is Bifunctional purine biosynthesis protein PurH.